We begin with the raw amino-acid sequence, 435 residues long: Membrane-bound ghrelin O-acyltransferase MBOAT4 (435 aa).

At 1 to 5 (MDWLQ) the chain is on the lumenal side. A helical membrane pass occupies residues 6-26 (FFFLHPVSLYQGAAFPFALLF). Residues 27 to 40 (NYLCITESFPTRAR) are Cytoplasmic-facing. Residues 41-56 (YLFLLAGGGVLALAAM) form a helical membrane-spanning segment. At 57 to 59 (GPY) the chain is on the lumenal side. Residues 60–76 (ALLIFIPALCAVAMISS) traverse the membrane as a helical segment. The Cytoplasmic segment spans residues 77 to 82 (LSPQEV). The helical transmembrane segment at 83–101 (HGLTFFFQMGWQTLCHLGL) threads the bilayer. Residues 102–120 (HYKEYYLCEPPPVRFYITL) lie on the Lumenal side of the membrane. The helical transmembrane segment at 121–136 (SSLMLLTQRVTSLSLD) threads the bilayer. Residues 137 to 206 (ISEGKVEAAW…YPSISFWALT (70 aa)) lie on the Cytoplasmic side of the membrane. A helical membrane pass occupies residues 207 to 227 (WRGLQILGLECLKVALRRVVS). The Lumenal portion of the chain corresponds to 228 to 240 (AGAGLDDCQRLEC). Residues 241 to 261 (IYIMWSTAGLFKLTYYSHWIL) form a helical membrane-spanning segment. Residues 262 to 324 (DDSLLHAAGF…KRLVFQRSRR (63 aa)) lie on the Cytoplasmic side of the membrane. Residues N307 and H338 contribute to the active site. Residues 325–338 (WPVLQTFAFSAWWH) form a helical membrane-spanning segment. Topologically, residues 339 to 340 (GL) are lumenal. Residues 341–357 (HPGQVFGFLCWSVMVKA) form a helical membrane-spanning segment. Topologically, residues 358 to 376 (DYLIHTFANGCIRSWPLRL) are cytoplasmic. A helical transmembrane segment spans residues 377 to 397 (LYRSLTWAHTQIIIAYVMLAV). Topologically, residues 398-407 (EGRSFSSLCR) are lumenal. Residues 408-428 (LCCSYNSIFPVTYCLLLFLLA) traverse the membrane as a helical segment. Residues 429–435 (RRKHKCN) lie on the Cytoplasmic side of the membrane.

The protein belongs to the membrane-bound acyltransferase family. Monomer. Not glycosylated.

It is found in the endoplasmic reticulum membrane. It catalyses the reaction octanoyl-CoA + L-seryl-[protein] = O-octanoyl-L-seryl-[protein] + CoA. It carries out the reaction decanoyl-CoA + L-seryl-[protein] = O-decanoyl-L-seryl-[protein] + CoA. The catalysed reaction is L-seryl-[protein] + acetyl-CoA = O-acetyl-L-seryl-[protein] + CoA. The enzyme catalyses L-seryl-[protein] + butanoyl-CoA = O-butanoyl-L-seryl-[protein] + CoA. It catalyses the reaction pentanoyl-CoA + L-seryl-[protein] = O-pentanoyl-L-seryl-[protein] + CoA. It carries out the reaction hexanoyl-CoA + L-seryl-[protein] = O-hexanoyl-L-seryl-[protein] + CoA. The catalysed reaction is heptanoyl-CoA + L-seryl-[protein] = O-heptanoyl-L-seryl-[protein] + CoA. The enzyme catalyses nonanoyl-CoA + L-seryl-[protein] = O-nonanoyl-L-seryl-[protein] + CoA. It catalyses the reaction L-seryl-[protein] + dodecanoyl-CoA = O-dodecanoyl-L-seryl-[protein] + CoA. It carries out the reaction L-seryl-[protein] + tetradecanoyl-CoA = O-tetradecanoyl-L-seryl-[protein] + CoA. The catalysed reaction is a fatty acyl-CoA + L-seryl-[protein] = O-fatty acyl-L-seryl-[protein] + CoA. Functionally, catalyzes ghrelin acylation at 'Ser-3' using preferentially octanoyl-CoA, hexanoyl-CoA and decanoyl-CoA as acyl-CoA donors leading to ghrelin activity. In vitro uses also acyl-CoA donors of different lengths from short-chain (C2) to long-chain fatty acids (C16) knowing that acyl-CoA donors from butanoyl-CoA (C4) to dodecanoyl-CoA (C12) are more efficient compared to longer acyl-CoA donors, such as myristoyl-CoA (C14) and palmitoyl-CoA (C16) that are not efficient. The sequence is that of Membrane-bound ghrelin O-acyltransferase MBOAT4 from Rattus norvegicus (Rat).